The primary structure comprises 462 residues: TNF receptor-associated factor family protein DDB_G0267754 (462 aa).

An RING-type; degenerate zinc finger spans residues Cys-24 to Arg-62. The segment at Lys-104–Gln-127 is disordered. 2 TRAF-type zinc fingers span residues Ser-150–Glu-217 and Ser-214–Ala-273. One can recognise an MATH domain in the interval Met-326 to Ile-449.

Belongs to the TNF receptor-associated factor family. A subfamily.

Its subcellular location is the cytoplasm. Functionally, probable adapter protein and signal transducer that links members of the tumor necrosis factor receptor family to different signaling pathways by association with the receptor cytoplasmic domain and kinases. This is TNF receptor-associated factor family protein DDB_G0267754 from Dictyostelium discoideum (Social amoeba).